The sequence spans 342 residues: Anthranilate phosphoribosyltransferase (342 aa).

5-phospho-alpha-D-ribose 1-diphosphate is bound by residues G81, 84–85, 91–94, 109–117, and S121; these read GD, NVSS, and KHGNRGVSS. G81 contributes to the anthranilate binding site. S93 is a binding site for Mg(2+). Residue N112 participates in anthranilate binding. R167 serves as a coordination point for anthranilate. Mg(2+)-binding residues include D226 and E227.

This sequence belongs to the anthranilate phosphoribosyltransferase family. In terms of assembly, homodimer. It depends on Mg(2+) as a cofactor.

It catalyses the reaction N-(5-phospho-beta-D-ribosyl)anthranilate + diphosphate = 5-phospho-alpha-D-ribose 1-diphosphate + anthranilate. It functions in the pathway amino-acid biosynthesis; L-tryptophan biosynthesis; L-tryptophan from chorismate: step 2/5. In terms of biological role, catalyzes the transfer of the phosphoribosyl group of 5-phosphorylribose-1-pyrophosphate (PRPP) to anthranilate to yield N-(5'-phosphoribosyl)-anthranilate (PRA). This Marinobacter nauticus (strain ATCC 700491 / DSM 11845 / VT8) (Marinobacter aquaeolei) protein is Anthranilate phosphoribosyltransferase.